A 704-amino-acid polypeptide reads, in one-letter code: Elongation factor G (704 aa).

Residues 8–290 (EKYRNIGICA…GVVRYLPAPN (283 aa)) form the tr-type G domain. Residues 17 to 24 (AHVDAGKT), 88 to 92 (DTPGH), and 142 to 145 (NKMD) each bind GTP.

Belongs to the TRAFAC class translation factor GTPase superfamily. Classic translation factor GTPase family. EF-G/EF-2 subfamily.

It localises to the cytoplasm. In terms of biological role, catalyzes the GTP-dependent ribosomal translocation step during translation elongation. During this step, the ribosome changes from the pre-translocational (PRE) to the post-translocational (POST) state as the newly formed A-site-bound peptidyl-tRNA and P-site-bound deacylated tRNA move to the P and E sites, respectively. Catalyzes the coordinated movement of the two tRNA molecules, the mRNA and conformational changes in the ribosome. The sequence is that of Elongation factor G from Francisella tularensis subsp. mediasiatica (strain FSC147).